The sequence spans 81 residues: Sulfur carrier protein TusA (81 aa).

The Cysteine persulfide intermediate role is filled by C19.

This sequence belongs to the sulfur carrier protein TusA family.

It localises to the cytoplasm. Its function is as follows. Sulfur carrier protein which probably makes part of a sulfur-relay system. The protein is Sulfur carrier protein TusA of Shewanella sp. (strain ANA-3).